The sequence spans 385 residues: Cytochrome b (385 aa).

4 helical membrane-spanning segments follow: residues 32-52 (LGSL…FMAM), 76-98 (WLLR…MHIA), 113-133 (VWIV…LGYC), and 179-199 (FFAL…MHFM). Positions 82 and 96 each coordinate heme b. Residues His-183 and His-197 each contribute to the heme b site. Residue His-202 coordinates a ubiquinone. Helical transmembrane passes span 225-245 (FIFK…LFVF), 289-309 (LLGV…PITD), 321-341 (LSKF…QIGQ), and 348-368 (FVLM…IIVP).

It belongs to the cytochrome b family. Fungal cytochrome b-c1 complex contains 10 subunits; 3 respiratory subunits, 2 core proteins and 5 low-molecular weight proteins. Cytochrome b-c1 complex is a homodimer. Heme b is required as a cofactor.

It is found in the mitochondrion inner membrane. Functionally, component of the ubiquinol-cytochrome c reductase complex (complex III or cytochrome b-c1 complex) that is part of the mitochondrial respiratory chain. The b-c1 complex mediates electron transfer from ubiquinol to cytochrome c. Contributes to the generation of a proton gradient across the mitochondrial membrane that is then used for ATP synthesis. This Candida glabrata (strain ATCC 2001 / BCRC 20586 / JCM 3761 / NBRC 0622 / NRRL Y-65 / CBS 138) (Yeast) protein is Cytochrome b (COB).